A 363-amino-acid chain; its full sequence is 3-dehydroquinate synthase (363 aa).

NAD(+)-binding positions include 72 to 77 (SGEKEK), 130 to 131 (TT), lysine 142, and lysine 151. Positions 184, 247, and 264 each coordinate Zn(2+).

This sequence belongs to the sugar phosphate cyclases superfamily. Dehydroquinate synthase family. The cofactor is Co(2+). Requires Zn(2+) as cofactor. NAD(+) serves as cofactor.

It is found in the cytoplasm. It carries out the reaction 7-phospho-2-dehydro-3-deoxy-D-arabino-heptonate = 3-dehydroquinate + phosphate. The protein operates within metabolic intermediate biosynthesis; chorismate biosynthesis; chorismate from D-erythrose 4-phosphate and phosphoenolpyruvate: step 2/7. Its function is as follows. Catalyzes the conversion of 3-deoxy-D-arabino-heptulosonate 7-phosphate (DAHP) to dehydroquinate (DHQ). The sequence is that of 3-dehydroquinate synthase from Bacillus thuringiensis subsp. konkukian (strain 97-27).